Consider the following 209-residue polypeptide: V-type ATP synthase subunit D 2 (209 aa).

It belongs to the V-ATPase D subunit family.

In terms of biological role, produces ATP from ADP in the presence of a proton gradient across the membrane. The chain is V-type ATP synthase subunit D 2 (atpD2) from Treponema pallidum (strain Nichols).